The primary structure comprises 417 residues: Gamma-glutamyl phosphate reductase (417 aa).

It belongs to the gamma-glutamyl phosphate reductase family.

It is found in the cytoplasm. It catalyses the reaction L-glutamate 5-semialdehyde + phosphate + NADP(+) = L-glutamyl 5-phosphate + NADPH + H(+). Its pathway is amino-acid biosynthesis; L-proline biosynthesis; L-glutamate 5-semialdehyde from L-glutamate: step 2/2. In terms of biological role, catalyzes the NADPH-dependent reduction of L-glutamate 5-phosphate into L-glutamate 5-semialdehyde and phosphate. The product spontaneously undergoes cyclization to form 1-pyrroline-5-carboxylate. The protein is Gamma-glutamyl phosphate reductase of Idiomarina loihiensis (strain ATCC BAA-735 / DSM 15497 / L2-TR).